We begin with the raw amino-acid sequence, 96 residues long: C-C motif chemokine 20 (96 aa).

Positions 1 to 26 are cleaved as a signal peptide; it reads MACKHLPFLALAGVLLAYLCSQSEAA. 2 disulfide bridges follow: Cys-31–Cys-58 and Cys-32–Cys-74.

It belongs to the intercrine beta (chemokine CC) family. In terms of tissue distribution, low levels in thymus and lung.

The protein resides in the secreted. Acts as a ligand for C-C chemokine receptor CCR6. Signals through binding and activation of CCR6 and induces a strong chemotactic response and mobilization of intracellular calcium ions. The ligand-receptor pair CCL20-CCR6 is responsible for the chemotaxis of dendritic cells (DC), effector/memory T-cells and B-cells and plays an important role at skin and mucosal surfaces under homeostatic and inflammatory conditions, as well as in pathology, including cancer and autoimmune diseases. CCL20 acts as a chemotactic factor that attracts lymphocytes and, slightly, neutrophils, but not monocytes. Involved in the recruitment of both the pro-inflammatory IL17 producing helper T-cells (Th17) and the regulatory T-cells (Treg) to sites of inflammation. Required for optimal migration of thymic natural regulatory T cells (nTregs) and DN1 early thymocyte progenitor cells. Positively regulates sperm motility and chemotaxis via its binding to CCR6 which triggers Ca2+ mobilization in the sperm which is important for its motility. May be involved in formation and function of the mucosal lymphoid tissues by attracting lymphocytes and dendritic cells towards epithelial cells. This Rattus norvegicus (Rat) protein is C-C motif chemokine 20 (Ccl20).